Here is a 956-residue protein sequence, read N- to C-terminus: Pyruvate, phosphate dikinase, chloroplastic (956 aa).

The transit peptide at 1–79 directs the protein to the chloroplast; the sequence is MMSSLFVEGM…AVLNPVSPPV (79 aa). Threonine 536 is modified (phosphothreonine; by PDRP1). The active-site Tele-phosphohistidine intermediate is the histidine 538. Residues arginine 644, arginine 701, glutamate 830, glycine 851, threonine 852, asparagine 853, and aspartate 854 each contribute to the substrate site. A Mg(2+)-binding site is contributed by glutamate 830. Mg(2+) is bound at residue aspartate 854. Catalysis depends on cysteine 916, which acts as the Proton donor.

This sequence belongs to the PEP-utilizing enzyme family. In terms of assembly, homotetramer. It depends on Mg(2+) as a cofactor. Post-translationally, phosphorylation of Thr-536 in the dark inactivates the enzyme. Dephosphorylation upon light stimulation reactivates the enzyme.

Its subcellular location is the plastid. It is found in the chloroplast. It catalyses the reaction pyruvate + phosphate + ATP = phosphoenolpyruvate + AMP + diphosphate + H(+). Its activity is regulated as follows. Activated by light-induced dephosphorylation. Inhibited by dark-induced phosphorylation. Both reactions are catalyzed by PDRP1. Its function is as follows. Formation of phosphoenolpyruvate. The sequence is that of Pyruvate, phosphate dikinase, chloroplastic (PPDK) from Flaveria pringlei.